Reading from the N-terminus, the 79-residue chain is Major outer membrane lipoprotein Lpp 2 (79 aa).

An N-terminal signal peptide occupies residues 1–21; the sequence is MNRTNKLILGAVVLGSALLAG. The N-palmitoyl cysteine moiety is linked to residue Cys-22. Residue Cys-22 is the site of S-diacylglycerol cysteine attachment. Repeats lie at residues 25–35 and 39–49; these read NAKIDQLSSDV and SAKVDQLSNDV. Residues 28–76 are a coiled coil; it reads IDQLSSDVQTLSAKVDQLSNDVNAMRSDIQAAKDDAARANQRLDNKVSR. The tract at residues 60 to 79 is disordered; the sequence is KDDAARANQRLDNKVSRVRK. N6-murein peptidoglycan lysine is present on Lys-79.

Belongs to the Lpp family. Homotrimer.

It is found in the cell outer membrane. Its subcellular location is the secreted. The protein resides in the cell wall. Functionally, a highly abundant outer membrane lipoprotein that controls the distance between the inner and outer membranes. The only protein known to be covalently linked to the peptidoglycan network (PGN). Also non-covalently binds the PGN. The link between the cell outer membrane and PGN contributes to maintenance of the structural and functional integrity of the cell envelope, and maintains the correct distance between the PGN and the outer membrane. This chain is Major outer membrane lipoprotein Lpp 2, found in Salmonella paratyphi A (strain ATCC 9150 / SARB42).